Here is a 448-residue protein sequence, read N- to C-terminus: Zinc finger and BTB domain-containing protein 14 (448 aa).

One can recognise a BTB domain in the interval Cys-36–Lys-102. A Nuclear localization signal motif is present at residues His-50–Lys-66. The interval Val-130–Thr-193 is disordered. Residues Asp-156–Asp-167 show a composition bias toward acidic residues. C2H2-type zinc fingers lie at residues Ile-275–Pro-302, Phe-303–Pro-330, Tyr-331–Pro-358, Phe-359–Pro-386, and Phe-387–Gln-415. Over residues Arg-404–Gln-415 the composition is skewed to basic and acidic residues. The tract at residues Arg-404–Glu-425 is disordered. A compositionally biased stretch (polar residues) spans Val-416–Glu-425.

It belongs to the krueppel C2H2-type zinc-finger protein family. Interacts with ZBTB21.

It localises to the nucleus. Its function is as follows. Transcriptional activator of the dopamine transporter (DAT), binding it's promoter at the consensus sequence 5'-CCTGCACAGTTCACGGA-3'. Binds to 5'-d(GCC)(n)-3' trinucleotide repeats in promoter regions and acts as a repressor of the FMR1 gene. Transcriptional repressor of MYC and thymidine kinase promoters. This chain is Zinc finger and BTB domain-containing protein 14 (ZBTB14), found in Gallus gallus (Chicken).